The following is a 376-amino-acid chain: Flap endonuclease 1 (376 aa).

The segment at 1–105 (MGIKGLSKLL…GELHKRKENA (105 aa)) is N-domain. Asp34 is a binding site for Mg(2+). Arg47 and Arg71 together coordinate DNA. 5 residues coordinate Mg(2+): Asp87, Glu159, Glu161, Asp180, and Asp182. Positions 123-254 (QAKKLMKRTA…ITAFELIQQY (132 aa)) are I-domain. A DNA-binding site is contributed by Glu159. DNA is bound by residues Gly232 and Asp234. Residue Asp234 coordinates Mg(2+). The interaction with PCNA stretch occupies residues 336–344 (AQGRLDSFF). Residues 354 to 376 (SEAASGVKRKKPTTKAKESRKKK) are disordered. The segment covering 360–376 (VKRKKPTTKAKESRKKK) has biased composition (basic residues).

This sequence belongs to the XPG/RAD2 endonuclease family. FEN1 subfamily. Interacts with PCNA. Three molecules of FEN1 bind to one PCNA trimer with each molecule binding to one PCNA monomer. PCNA stimulates the nuclease activity without altering cleavage specificity. Mg(2+) is required as a cofactor. Phosphorylated. Phosphorylation upon DNA damage induces relocalization to the nuclear plasma.

The protein resides in the nucleus. Its subcellular location is the nucleolus. It is found in the nucleoplasm. It localises to the mitochondrion. Its function is as follows. Structure-specific nuclease with 5'-flap endonuclease and 5'-3' exonuclease activities involved in DNA replication and repair. During DNA replication, cleaves the 5'-overhanging flap structure that is generated by displacement synthesis when DNA polymerase encounters the 5'-end of a downstream Okazaki fragment. It enters the flap from the 5'-end and then tracks to cleave the flap base, leaving a nick for ligation. Also involved in the long patch base excision repair (LP-BER) pathway, by cleaving within the apurinic/apyrimidinic (AP) site-terminated flap. Acts as a genome stabilization factor that prevents flaps from equilibrating into structures that lead to duplications and deletions. Also possesses 5'-3' exonuclease activity on nicked or gapped double-stranded DNA, and exhibits RNase H activity. Also involved in replication and repair of rDNA and in repairing mitochondrial DNA. In Entamoeba histolytica (strain ATCC 30459 / HM-1:IMSS / ABRM), this protein is Flap endonuclease 1.